The primary structure comprises 1408 residues: DNA-directed RNA polymerase subunit beta' (1408 aa).

Cysteine 70, cysteine 72, cysteine 85, and cysteine 88 together coordinate Zn(2+). Positions 460, 462, and 464 each coordinate Mg(2+). Positions 822, 896, 903, and 906 each coordinate Zn(2+). The tract at residues 1386–1408 (DTGEAPPLSEEETGEIRNSGYAV) is disordered.

It belongs to the RNA polymerase beta' chain family. The RNAP catalytic core consists of 2 alpha, 1 beta, 1 beta' and 1 omega subunit. When a sigma factor is associated with the core the holoenzyme is formed, which can initiate transcription. Mg(2+) serves as cofactor. The cofactor is Zn(2+).

It carries out the reaction RNA(n) + a ribonucleoside 5'-triphosphate = RNA(n+1) + diphosphate. In terms of biological role, DNA-dependent RNA polymerase catalyzes the transcription of DNA into RNA using the four ribonucleoside triphosphates as substrates. This Nitrosospira multiformis (strain ATCC 25196 / NCIMB 11849 / C 71) protein is DNA-directed RNA polymerase subunit beta'.